Reading from the N-terminus, the 398-residue chain is Carbamoyl phosphate synthase small chain (398 aa).

The interval 1–207 is CPSase; that stretch reads MIQTISSSRP…KGYGTNNVHN (207 aa). Residues Ser60, Gly257, and Gly259 each contribute to the L-glutamine site. The region spanning 209–397 is the Glutamine amidotransferase type-1 domain; it reads HIVAIDYGIK…CDLIMNHKKI (189 aa). The active-site Nucleophile is Cys286. Leu287, Gln290, Asn328, Gly330, and Phe331 together coordinate L-glutamine. Residues His370 and Glu372 contribute to the active site.

The protein belongs to the CarA family. In terms of assembly, composed of two chains; the small (or glutamine) chain promotes the hydrolysis of glutamine to ammonia, which is used by the large (or ammonia) chain to synthesize carbamoyl phosphate. Tetramer of heterodimers (alpha,beta)4.

The catalysed reaction is hydrogencarbonate + L-glutamine + 2 ATP + H2O = carbamoyl phosphate + L-glutamate + 2 ADP + phosphate + 2 H(+). It catalyses the reaction L-glutamine + H2O = L-glutamate + NH4(+). It participates in amino-acid biosynthesis; L-arginine biosynthesis; carbamoyl phosphate from bicarbonate: step 1/1. Its pathway is pyrimidine metabolism; UMP biosynthesis via de novo pathway; (S)-dihydroorotate from bicarbonate: step 1/3. Small subunit of the glutamine-dependent carbamoyl phosphate synthetase (CPSase). CPSase catalyzes the formation of carbamoyl phosphate from the ammonia moiety of glutamine, carbonate, and phosphate donated by ATP, constituting the first step of 2 biosynthetic pathways, one leading to arginine and/or urea and the other to pyrimidine nucleotides. The small subunit (glutamine amidotransferase) binds and cleaves glutamine to supply the large subunit with the substrate ammonia. In Bartonella tribocorum (strain CIP 105476 / IBS 506), this protein is Carbamoyl phosphate synthase small chain.